A 348-amino-acid polypeptide reads, in one-letter code: MSNCELTVLKPAEVKLSPRDREGIINPMYDCQPAGAQYAGIGIKDCIPLVHGGQGCTMFVRLLFAQHFKENFDVASTSLHEESAVFGGAKRVEEGVLVLARRYPNLRVIPIITTCSTEVIGDDIEGTINVCNRALATEFPERKIHLAPVHTPSLKGSHVTGYAECVKSVFKTISDAHGKGQPSGKLNVFPGWVNPGDVVLLKRYFKEMGVDANIYMDTEDFDSPMLPNKSIETHGRTTVEDIADSANALGTLALARYEGATTGDLLQKTFQVPNHLVNTPYGIKNTDDMLRKIAEVTGKEIPESLVKERGIALDALADLAHMFFANKKVAIFGHPDLVLGLAQFCLEV.

[8Fe-7S] cluster-binding residues include Cys31, Cys56, Cys115, and Ser153.

It belongs to the NifD/NifK/NifE/NifN family. Hexamer of two alpha, two beta, and two delta chains. The cofactor is [8Fe-7S] cluster.

The enzyme catalyses N2 + 8 reduced [2Fe-2S]-[ferredoxin] + 16 ATP + 16 H2O = H2 + 8 oxidized [2Fe-2S]-[ferredoxin] + 2 NH4(+) + 16 ADP + 16 phosphate + 6 H(+). Its function is as follows. This vanadium-iron protein is part of the nitrogenase complex that catalyzes the key enzymatic reactions in nitrogen fixation. The polypeptide is Nitrogenase vanadium-iron protein beta chain (vnfK) (Azotobacter salinestris).